A 252-amino-acid polypeptide reads, in one-letter code: MDKLQNIRGVAFDLDGTLVDSAPGLAAAVDMALYALELPVAGEERVITWIGNGADVLMERALTWAREERATLRKTMGKPPVDEDIPAEEQVRILRKLFDRYYGEVAEEGTVLFPHVADTLGALHASGLSLGLVTNKPTPFVAPLLESLDIAKYFSVVIGGDDVQNKKPHPEPLLLVASRLGMMPEQMLFVGDSRNDIQAAKAAGCPSVGLTYGYNYGEAIALSEPDVIYDSFNDLLPALGLPHSDNQEIKND.

The active-site Nucleophile is D13. Mg(2+)-binding residues include D13, D15, and D192.

This sequence belongs to the HAD-like hydrolase superfamily. CbbY/CbbZ/Gph/YieH family. In terms of assembly, monomer. The cofactor is Mg(2+). Chloride is required as a cofactor.

The enzyme catalyses 2-phosphoglycolate + H2O = glycolate + phosphate. The protein operates within organic acid metabolism; glycolate biosynthesis; glycolate from 2-phosphoglycolate: step 1/1. Its function is as follows. Specifically catalyzes the dephosphorylation of 2-phosphoglycolate. Is involved in the dissimilation of the intracellular 2-phosphoglycolate formed during the DNA repair of 3'-phosphoglycolate ends, a major class of DNA lesions induced by oxidative stress. The polypeptide is Phosphoglycolate phosphatase (Salmonella typhimurium (strain LT2 / SGSC1412 / ATCC 700720)).